The following is a 210-amino-acid chain: MSHQTVALASKAKSPKPKRGKLDKEKMTALEKHVSFFDRNKDGTVYPWETYQGFRALGTGRLLAAFVAIFINMGLSKKTRPGKGFSPLFPIDVKNSHLCMHGSDTDVYDDDGRFVESKFEEIFNKHARTHKDALTAEEIQKMLKTNRDPFDITGWLSDYGEWKILHTLAQDKNGLLSEKSVRAIYDGSLFHQLEKKRSSSSSRGKKQKLP.

Positions 1–24 are disordered; sequence MSHQTVALASKAKSPKPKRGKLDK. The EF-hand domain maps to 25 to 60; it reads EKMTALEKHVSFFDRNKDGTVYPWETYQGFRALGTG. H33 provides a ligand contact to heme. Positions 38, 40, 42, 44, and 49 each coordinate Ca(2+). Positions 81–90 match the Proline-knot motif; it reads PGKGFSPLFP. At S188 the chain carries Phosphoserine.

This sequence belongs to the caleosin family. In terms of assembly, homodimer. Heme b is required as a cofactor. The cofactor is Ca(2+). Expressed in pollen coat.

Its subcellular location is the secreted. The catalysed reaction is RH + ROOH = ROH + ROH.. Functionally, probable calcium-binding peroxygenase. May be involved in pollination. The polypeptide is Probable peroxygenase 7 (PXG7) (Arabidopsis thaliana (Mouse-ear cress)).